The primary structure comprises 3291 residues: Protocadherin-16 (3291 aa).

The signal sequence occupies residues 1–35 (MQKELSVALSCPGMKSLRTLLPLLVLLGATVPGSW). The Extracellular portion of the chain corresponds to 36–2933 (GQAGSLDLQI…PDLNLLLVGA (2898 aa)). 27 consecutive Cadherin domains span residues 37–137 (QAGS…APAF), 138–249 (PQAR…APAF), 250–356 (NQSR…QPSM), 369–466 (VSEA…APAF), 476–572 (LPEV…EPQF), 573–679 (QRTF…PPQF), 680–784 (YPRE…PPIF), 785–888 (EQLQ…SPAF), 889–994 (PAPE…APRF), 995–1105 (DSPT…EPTF), 1100–1205 (SEEP…SPTF), 1218–1317 (IQVP…SPDL), 1326–1429 (VPVV…APTF), 1430–1539 (ARDP…APVF), 1539–1642 (FASP…APAF), 1643–1744 (PQQE…TPTF), 1745–1848 (GNTH…APVF), 1849–1953 (PVPS…APAF), 1976–2061 (LATL…GPRF), 2062–2164 (PRTS…APRF), 2165–2270 (LRPH…RPTI), 2270–2369 (IPQP…VPTF), 2370–2475 (SQSL…APSF), 2476–2595 (TLPH…PPVF), 2596–2699 (TRAS…GPAF), 2700–2806 (PLSL…DPVF), and 2807–2926 (LAPS…APDL). Residue Asn-396 is glycosylated (N-linked (GlcNAc...) asparagine). Asn-2354 carries N-linked (GlcNAc...) asparagine glycosylation. Residues 2867 to 2886 (SRAPGSGTTTSGGGGRTRRE) are disordered. The helical transmembrane segment at 2934–2954 (VAASLGVVVVLALAALVLGLV) threads the bilayer. The Cytoplasmic segment spans residues 2955-3291 (RARSRKAEAA…EPPDDTELRI (337 aa)). The segment at 2978–3033 (SLQKLGREPPSPPPSEHLYHQTLPSYGGPGAGGPYPRGGSLDPSHSSGRGSAEAAE) is disordered. A compositionally biased stretch (gly residues) spans 3004–3013 (GGPGAGGPYP). At Ser-3048 the chain carries Phosphoserine. Disordered regions lie at residues 3051–3081 (SSLA…APDT) and 3226–3291 (ASHR…ELRI). Residues 3237–3259 (SLSSAAMSPSFSPSLSPLAARSP) are compositionally biased toward low complexity. Residues 3270-3279 (PSASALSTES) are compositionally biased toward polar residues.

As to quaternary structure, heterophilic interaction with FAT4; this interaction affects their respective protein levels. Expressed in the epicardium and atrioventricular sulcus (at protein level).

The protein resides in the cell membrane. In terms of biological role, calcium-dependent cell-adhesion protein. Mediates functions in neuroprogenitor cell proliferation and differentiation. In the heart, has a critical role for proper morphogenesis of the mitral valve, acting in the regulation of cell migration involved in valve formation. The sequence is that of Protocadherin-16 (Dchs1) from Mus musculus (Mouse).